The primary structure comprises 354 residues: RNA 3'-terminal phosphate cyclase (354 aa).

ATP contacts are provided by residues Q100 and 290–293 (HMGD). H316 functions as the Tele-AMP-histidine intermediate in the catalytic mechanism.

Belongs to the RNA 3'-terminal cyclase family. Type 1 subfamily.

It is found in the cytoplasm. It catalyses the reaction a 3'-end 3'-phospho-ribonucleotide-RNA + ATP = a 3'-end 2',3'-cyclophospho-ribonucleotide-RNA + AMP + diphosphate. In terms of biological role, catalyzes the conversion of 3'-phosphate to a 2',3'-cyclic phosphodiester at the end of RNA. The mechanism of action of the enzyme occurs in 3 steps: (A) adenylation of the enzyme by ATP; (B) transfer of adenylate to an RNA-N3'P to produce RNA-N3'PP5'A; (C) and attack of the adjacent 2'-hydroxyl on the 3'-phosphorus in the diester linkage to produce the cyclic end product. The biological role of this enzyme is unknown but it is likely to function in some aspects of cellular RNA processing. This Caldivirga maquilingensis (strain ATCC 700844 / DSM 13496 / JCM 10307 / IC-167) protein is RNA 3'-terminal phosphate cyclase.